The following is an 80-amino-acid chain: Toxin Acra I-2 (80 aa).

Positions 1–22 are cleaved as a signal peptide; sequence MMKLALFSIIVILFSLIGSIHG. One can recognise an LCN-type CS-alpha/beta domain in the interval 25–80; sequence VPGNYPLDSSGNKYPCTVLGDNQSCIDVCKKHGVKYGYCYSFKCWCEFLEDKNVSI. 3 disulfides stabilise this stretch: Cys-40–Cys-63, Cys-49–Cys-68, and Cys-53–Cys-70.

In terms of tissue distribution, expressed by the venom gland.

The protein localises to the secreted. In terms of biological role, probable neurotoxin that inhibits ion channels. Is toxic to mice. Is about 2.8% of the total protein in the venom. The protein is Toxin Acra I-2 of Androctonus crassicauda (Arabian fat-tailed scorpion).